The primary structure comprises 790 residues: MKAHPKEMVPLMGKRVAAPSGNPAILPEKRPAEITPTKKSAHFFLEIEGFEPNPTVAKTSPPVFSKPMDSNIRQCISGNCDDMDSPQSPQDDVTETPSNPNSPSAQLAKEEQRRKKRRLKKRIFAAVSEGCVEELVELLVELQELCRRRHDEDVPDFLMHKLTASDTGKTCLMKALLNINPNTKEIVRILLAFAEENDILGRFINAEYTEEAYEGQTALNIAIERRQGDIAALLIAAGADVNAHAKGAFFNPKYQHEGFYFGETPLALAACTNQPEIVQLLMEHEQTDITSRDSRGNNILHALVTVAEDFKTQNDFVKRMYDMILLRSGNWELETTRNNDGLTPLQLAAKMGKAEILKYILSREIKEKRLRSLSRKFTDWAYGPVSSSLYDLTNVDTTTDNSVLEITVYNTNIDNRHEMLTLEPLHTLLHMKWKKFAKHMFFLSFCFYFFYNITLTLVSYYRPREEEAIPHPLALTHKMGWLQLLGRMFVLIWAMCISVKEGIAIFLLRPSDLQSILSDAWFHFVFFIQAVLVILSVFLYLFAYKEYLACLVLAMALGWANMLYYTRGFQSMGMYSVMIQKVILHDVLKFLFVYIVFLLGFGVALASLIEKCPKDNKDCSSYGSFSDAVLELFKLTIGLGDLNIQQNSKYPILFLFLLITYVILTFVLLLNMLIALMGETVENVSKESERIWRLQRARTILEFEKMLPEWLRSRFRMGELCKVAEDDFRLCLRINEVKWTEWKTHVSFLNEDPGPVRRTDFNKIQDSSRNNSKTTLNAFEEVEEFPETSV.

The Cytoplasmic segment spans residues 1–430; it reads MKAHPKEMVP…TLEPLHTLLH (430 aa). 3 disordered regions span residues 15–34, 52–71, and 76–112; these read RVAAPSGNPAILPEKRPAEI, PNPTVAKTSPPVFSKPMDSN, and ISGNCDDMDSPQSPQDDVTETPSNPNSPSAQLAKEEQ. A compositionally biased stretch (polar residues) spans 95–105; the sequence is ETPSNPNSPSA. 7 ANK repeats span residues 117 to 148, 170 to 198, 214 to 243, 261 to 291, 298 to 330, 340 to 362, and 398 to 420; these read RRLKKRIFAAVSEGCVEELVELLVELQELCRR, TCLMKALLNINPNTKEIVRILLAFAEEND, EGQTALNIAIERRQGDIAALLIAAGADVNA, FGETPLALAACTNQPEIVQLLMEHEQTDITS, NILHALVTVAEDFKTQNDFVKRMYDMILLRSGN, DGLTPLQLAAKMGKAEILKYILS, and TTDNSVLEITVYNTNIDNRHEML. The helical transmembrane segment at 431-460 threads the bilayer; it reads MKWKKFAKHMFFLSFCFYFFYNITLTLVSY. The Extracellular portion of the chain corresponds to 461–479; the sequence is YRPREEEAIPHPLALTHKM. The chain crosses the membrane as a helical span at residues 480–508; sequence GWLQLLGRMFVLIWAMCISVKEGIAIFLL. Residues 509–519 lie on the Cytoplasmic side of the membrane; sequence RPSDLQSILSD. The helical transmembrane segment at 520-540 threads the bilayer; it reads AWFHFVFFIQAVLVILSVFLY. At 541–545 the chain is on the extracellular side; it reads LFAYK. Residues 546–566 form a helical membrane-spanning segment; the sequence is EYLACLVLAMALGWANMLYYT. The Cytoplasmic segment spans residues 567 to 569; that stretch reads RGF. A helical membrane pass occupies residues 570–608; that stretch reads QSMGMYSVMIQKVILHDVLKFLFVYIVFLLGFGVALASL. Residues 609–620 are Extracellular-facing; sequence IEKCPKDNKDCS. The segment at residues 621–646 is an intramembrane region (pore-forming); the sequence is SYGSFSDAVLELFKLTIGLGDLNIQQ. A Na(+)-binding site is contributed by G638. The Extracellular segment spans residues 647-649; sequence NSK. A helical transmembrane segment spans residues 650–686; that stretch reads YPILFLFLLITYVILTFVLLLNMLIALMGETVENVSK. Topologically, residues 687–790 are cytoplasmic; sequence ESERIWRLQR…EVEEFPETSV (104 aa).

This sequence belongs to the transient receptor (TC 1.A.4) family. TrpV subfamily. TRPV3 sub-subfamily. In terms of assembly, homotetramer. May convert from a homotetramer to a homopentamer to allow pore dilation. Interacts with TRPV1; may form a heteromeric channel with TRPV1. Interacts with SNX11; this interaction promotes TRPV3 trafficking from the cell membrane to lysosome for degradation. Abundantly expressed in CNS. Widely expressed at low levels. Detected in dorsal root ganglion (at protein level). Expressed in the keratinocyte layers of the outer root sheath and, to lesser extent, to the matrix of the hair follicles (at protein level).

The protein resides in the cell membrane. The protein localises to the cytoplasm. Its subcellular location is the lysosome. It carries out the reaction Ca(2+)(in) = Ca(2+)(out). The enzyme catalyses Mg(2+)(in) = Mg(2+)(out). It catalyses the reaction Na(+)(in) = Na(+)(out). The catalysed reaction is K(+)(in) = K(+)(out). With respect to regulation, activated by cannabinoid that binds to the vanilloid binding pocket. Diphenylboronic anhydride induces pore dilation and enhances cation permeability by promoting the conversion to a homopentamer. In terms of biological role, non-selective calcium permeant cation channel. It is activated by innocuous (warm) temperatures and shows an increased response at noxious temperatures greater than 39 degrees Celsius. Activation exhibits an outward rectification. The channel pore can dilate to provide permeability to larger cations. May associate with TRPV1 and may modulate its activity. Is a negative regulator of hair growth and cycling: TRPV3-coupled signaling suppresses keratinocyte proliferation in hair follicles and induces apoptosis and premature hair follicle regression (catagen). The polypeptide is Transient receptor potential cation channel subfamily V member 3 (TRPV3) (Homo sapiens (Human)).